A 200-amino-acid polypeptide reads, in one-letter code: TATA-box-binding protein 1 (200 aa).

Threonine 2 carries the post-translational modification N-acetylthreonine. 2 repeat units span residues 25–101 and 115–192.

It belongs to the TBP family. In terms of assembly, belongs to the TFIID complex together with the TBP-associated factors (TAFs). Binds DNA as monomer. Interacts with TAF1 (via N-terminus). Interacts with MEE12/CCG1. Associates with PWP2 in the nucleus. Component of a nuclear protein complex containing at least TATA binding proteins (TBPs, e.g. TBP1 and TBP2) and ATX1.

It is found in the nucleus. Functionally, general transcription factor that functions at the core of the DNA-binding multiprotein factor TFIID. Binding of TFIID to the TATA box is the initial transcriptional step of the pre-initiation complex (PIC), playing a role in the activation of eukaryotic genes transcribed by RNA polymerase II. This is TATA-box-binding protein 1 from Arabidopsis thaliana (Mouse-ear cress).